Consider the following 177-residue polypeptide: Interleukin-1 receptor antagonist protein (177 aa).

Residues 1-25 (MEVCRCHHGYLISLLLFLFHSETAC) form the signal peptide. Residues cysteine 91 and cysteine 141 are joined by a disulfide bond. Residues asparagine 109 and asparagine 114 are each glycosylated (N-linked (GlcNAc...) asparagine).

The protein belongs to the IL-1 family.

The protein localises to the secreted. Its function is as follows. Anti-inflammatory antagonist of interleukin-1 family of proinflammatory cytokines such as interleukin-1beta/IL1B and interleukin-1alpha/IL1A. Protects from immune dysregulation and uncontrolled systemic inflammation triggered by IL1 for a range of innate stimulatory agents such as pathogens. This Tursiops truncatus (Atlantic bottle-nosed dolphin) protein is Interleukin-1 receptor antagonist protein (IL1RN).